The sequence spans 99 residues: Large ribosomal subunit protein bL21 (99 aa).

Belongs to the bacterial ribosomal protein bL21 family. In terms of assembly, part of the 50S ribosomal subunit. Contacts protein L20.

In terms of biological role, this protein binds to 23S rRNA in the presence of protein L20. The protein is Large ribosomal subunit protein bL21 of Mesoplasma florum (strain ATCC 33453 / NBRC 100688 / NCTC 11704 / L1) (Acholeplasma florum).